A 239-amino-acid polypeptide reads, in one-letter code: Glutathione S-transferase verG (239 aa).

Residues 18–101 (KPLIFVMEGR…YLSNKYDAKR (84 aa)) form the GST N-terminal domain. Residues 107–237 (NAAENLEICN…ELDSRKEIAI (131 aa)) enclose the GST C-terminal domain.

The protein belongs to the GST superfamily.

It catalyses the reaction RX + glutathione = an S-substituted glutathione + a halide anion + H(+). It participates in mycotoxin biosynthesis. Glutathione S-transferase; part of the gene cluster that mediates the biosynthesis of 11'-deoxyverticillin A, one of the dimeric epipolythiodioxopiperazines (ETPs) from the verticillin family that act as mycotoxins. 11'-deoxyverticillin A is required for normal conidiation. The nonribosomal peptide synthetase verP is speculated to be responsible for condensation of amino acids to form the carbon skeleton of verticillin, whereas the cluster-specific tailoring enzymes are involved in further modifications leading to the production of 11'-deoxyverticillin A. The chain is Glutathione S-transferase verG from Clonostachys rogersoniana.